Reading from the N-terminus, the 809-residue chain is Probable replication endonuclease from prophage-like region (809 aa).

Residues Tyr503 and Tyr507 each act as O-(5'-phospho-DNA)-tyrosine intermediate in the active site.

The protein belongs to the phage GPA family.

Possible endonuclease which induces a single-strand cut and initiates DNA replication. In Salmonella typhimurium (strain LT2 / SGSC1412 / ATCC 700720), this protein is Probable replication endonuclease from prophage-like region.